A 234-amino-acid polypeptide reads, in one-letter code: Purine nucleoside phosphorylase DeoD-type (234 aa).

His4 provides a ligand contact to a purine D-ribonucleoside. Phosphate-binding positions include Gly20, Arg24, Arg43, and 87–90 (RIGS). Residues 179–181 (DME) and 203–204 (SD) contribute to the a purine D-ribonucleoside site. Asp204 functions as the Proton donor in the catalytic mechanism.

It belongs to the PNP/UDP phosphorylase family. As to quaternary structure, homohexamer; trimer of homodimers.

It carries out the reaction a purine D-ribonucleoside + phosphate = a purine nucleobase + alpha-D-ribose 1-phosphate. The enzyme catalyses a purine 2'-deoxy-D-ribonucleoside + phosphate = a purine nucleobase + 2-deoxy-alpha-D-ribose 1-phosphate. In terms of biological role, catalyzes the reversible phosphorolytic breakdown of the N-glycosidic bond in the beta-(deoxy)ribonucleoside molecules, with the formation of the corresponding free purine bases and pentose-1-phosphate. This is Purine nucleoside phosphorylase DeoD-type from Shewanella oneidensis (strain ATCC 700550 / JCM 31522 / CIP 106686 / LMG 19005 / NCIMB 14063 / MR-1).